A 943-amino-acid polypeptide reads, in one-letter code: Isoleucine--tRNA ligase (943 aa).

Residues 58–68 (PYANGSIHIGH) carry the 'HIGH' region motif. E567 is an L-isoleucyl-5'-AMP binding site. The short motif at 608 to 612 (KMSKS) is the 'KMSKS' region element. An ATP-binding site is contributed by K611. Residues C906, C909, C926, and C929 each coordinate Zn(2+).

The protein belongs to the class-I aminoacyl-tRNA synthetase family. IleS type 1 subfamily. In terms of assembly, monomer. Zn(2+) serves as cofactor.

Its subcellular location is the cytoplasm. It catalyses the reaction tRNA(Ile) + L-isoleucine + ATP = L-isoleucyl-tRNA(Ile) + AMP + diphosphate. Its function is as follows. Catalyzes the attachment of isoleucine to tRNA(Ile). As IleRS can inadvertently accommodate and process structurally similar amino acids such as valine, to avoid such errors it has two additional distinct tRNA(Ile)-dependent editing activities. One activity is designated as 'pretransfer' editing and involves the hydrolysis of activated Val-AMP. The other activity is designated 'posttransfer' editing and involves deacylation of mischarged Val-tRNA(Ile). The chain is Isoleucine--tRNA ligase from Pseudomonas aeruginosa (strain ATCC 15692 / DSM 22644 / CIP 104116 / JCM 14847 / LMG 12228 / 1C / PRS 101 / PAO1).